We begin with the raw amino-acid sequence, 316 residues long: Retinol dehydrogenase 12 (316 aa).

Residue 46-52 (GANTGIG) participates in NADP(+) binding. Residue Ser175 coordinates substrate. Tyr200 (proton acceptor) is an active-site residue.

This sequence belongs to the short-chain dehydrogenases/reductases (SDR) family. As to expression, expressed in the inner segments of the photoreceptor in retina.

The catalysed reaction is all-trans-retinol + NADP(+) = all-trans-retinal + NADPH + H(+). It carries out the reaction 11-cis-retinol + NADP(+) = 11-cis-retinal + NADPH + H(+). The enzyme catalyses 9-cis-retinol + NADP(+) = 9-cis-retinal + NADPH + H(+). It catalyses the reaction a 4-hydroxynonen-1-ol + NADP(+) = a 4-hydroxynonenal + NADPH + H(+). The catalysed reaction is (E)-non-2-en-1-ol + NADP(+) = (E)-non-2-enal + NADPH + H(+). It carries out the reaction (Z)-non-6-en-1-ol + NADP(+) = (Z)-non-6-enal + NADPH + H(+). The enzyme catalyses nonan-1-ol + NADP(+) = nonanal + NADPH + H(+). Its pathway is cofactor metabolism; retinol metabolism. In terms of biological role, retinoids dehydrogenase/reductase with a clear preference for NADP. Displays high activity towards 9-cis, 11-cis and all-trans-retinal. Shows very weak activity toward 13-cis-retinol. Also exhibits activity, albeit with lower affinity than for retinaldehydes, towards lipid peroxidation products (C9 aldehydes) such as 4-hydroxynonenal and trans-2-nonenal. Plays an important function in photoreceptor cells to detoxify 4-hydroxynonenal and potentially other toxic aldehyde products resulting from lipid peroxidation. Has no dehydrogenase activity towards steroids. In Mus musculus (Mouse), this protein is Retinol dehydrogenase 12 (Rdh12).